We begin with the raw amino-acid sequence, 1836 residues long: InaD-like protein (1836 aa).

An L27 domain is found at 1 to 65; sequence MPENPAAEKM…SIKQLKGQLS (65 aa). 3 PDZ domains span residues 134–221, 248–328, and 365–453; these read YIDI…AREV, DVEL…ARDP, and NVEL…VRRK. Serine 455, serine 459, and serine 482 each carry phosphoserine. The span at 456 to 466 shows a compositional bias: polar residues; that stretch reads LSASPFEQPSS. Residues 456 to 492 form a disordered region; sequence LSASPFEQPSSREAVAEPPEVPELTGSLKPETNSRME. Residues 555–641 form the PDZ 4 domain; that stretch reads DEELQKYSKL…PFTLVCCRRL (87 aa). Residue serine 647 is modified to Phosphoserine. PDZ domains follow at residues 687–773 and 1074–1166; these read TVEL…ICKP and PRIV…VVQS. Polar residues predominate over residues 1173 to 1191; sequence VIPSVNNKGKTPPQNQDQN. Residues 1173 to 1232 form a disordered region; sequence VIPSVNNKGKTPPQNQDQNTQEKKAKRHGTAPPPMKLPPPYRAPSADTEESEEDSALTDK. Positions 1203–1214 are enriched in pro residues; sequence APPPMKLPPPYR. Phosphoserine is present on serine 1217. The span at 1219–1228 shows a compositional bias: acidic residues; it reads DTEESEEDSA. In terms of domain architecture, PDZ 7 spans 1245-1328; that stretch reads LHIIELEKDK…PTRVKLVFIR (84 aa). The tract at residues 1341–1448 is disordered; sequence FPVPSHSPSP…ADVTGSGNFQ (108 aa). The segment covering 1372–1383 has biased composition (basic and acidic residues); that stretch reads PLPERESSKPED. Composition is skewed to polar residues over residues 1415–1426 and 1434–1448; these read YSAQVSSSSQEI and CQST…GNFQ. 2 consecutive PDZ domains span residues 1472–1555 and 1568–1650; these read EMII…VIYR and VFLV…EIGR. Threonine 1545 carries the post-translational modification Phosphothreonine. The segment at 1657–1678 is disordered; that stretch reads ASSRKTSQNSQGDQHSAHSSCR. The 87-residue stretch at 1709–1795 folds into the PDZ 10 domain; the sequence is PRTVEIIREL…FGRIILQVVA (87 aa). Residues 1813-1836 are disordered; that stretch reads SQLGSPTADRHPQDPEELLQRTAD.

Forms a ternary complex with PALS1 and CRB1. Component of a complex whose core is composed of ARHGAP17, AMOT, PALS1, INADL/PATJ and PARD3/PAR3. Forms a heterotrimeric complex composed of MMP5, LIN7B and PATJ; the N-terminal L27 domain of PALS1 interacts with the L27 domain of PATJ and the C-terminal L27 domain of PALS1 interacts with the L27 domain of LIN7B. Component of a complex composed of CRB3, PALS1 and PATJ. As part of the Crumbs complex; interacts with WWP1, the interaction is enhanced by AMOTL2 and facilitates WWP1 localization to the plasma membrane. The Crumbs complex promotes monoubiquitination of AMOTL2 by WWP1, which activates the Hippo signaling pathway. Interacts (via N-terminus) with PALS1/PALS (via PDZ domain). Interacts with TJP3/ZO-3 and CLDN1/claudin-1. Interacts with ASIC3, KCNJ10, KCNJ15, GRIN2A, GRIN2B, GRIN2C, GRIN2D, NLGN2, and HTR2A. Interacts with MPP7. Directly interacts with HTR4. Interacts (via PDZ domain 8) with WWC1 (via the ADDV motif). Interacts with SLC6A4. Interacts (via C-terminus) with ARHGEF18. Interacts with NPHP1. Interacts with PARD3/PAR3. Interacts (via PDZ1-6 domains) with TJP1/ZO1; the interaction is required for attachment and extension of TJP1/ZO1 condensates along the apical cell interface. Abundantly expressed in germ cells, also expressed in testes and seminiferous tubules, with faint expression in Sertoli cells (at protein level).

The protein localises to the cell junction. Its subcellular location is the tight junction. The protein resides in the apical cell membrane. It is found in the cytoplasm. It localises to the perinuclear region. Scaffolding protein that facilitates the localization of proteins to the cell membrane. Required for the correct formation of tight junctions and epithelial apico-basal polarity. Acts (via its L27 domain) as an apical connector and elongation factor for multistranded TJP1/ZO1 condensates that form a tight junction belt, thereby required for the formation of the tight junction-mediated cell barrier. Positively regulates epithelial cell microtubule elongation and cell migration, possibly via facilitating localization of PRKCI/aPKC and PAR3D/PAR3 at the leading edge of migrating cells. Plays a role in the correct reorientation of the microtubule-organizing center during epithelial migration. May regulate the surface expression and/or function of ASIC3 in sensory neurons. May recruit ARHGEF18 to apical cell-cell boundaries. The chain is InaD-like protein from Rattus norvegicus (Rat).